Consider the following 283-residue polypeptide: Malate dehydrogenase (283 aa).

NAD(+) is bound by residues 1–2 (IG) and Asp23. Substrate-binding residues include Arg70 and Arg76. NAD(+) is bound by residues Asn83 and 106-108 (ITN). 2 residues coordinate substrate: Asn108 and Arg142. His166 functions as the Proton acceptor in the catalytic mechanism. An NAD(+)-binding site is contributed by Met216.

The protein belongs to the LDH/MDH superfamily. MDH type 1 family. Homodimer.

It carries out the reaction (S)-malate + NAD(+) = oxaloacetate + NADH + H(+). Functionally, catalyzes the reversible oxidation of malate to oxaloacetate. In Salmonella muenchen, this protein is Malate dehydrogenase (mdh).